A 496-amino-acid chain; its full sequence is N-succinylglutamate 5-semialdehyde dehydrogenase (496 aa).

229–234 (GSYATG) contacts NAD(+). Residues Glu252 and Cys286 contribute to the active site.

The protein belongs to the aldehyde dehydrogenase family. AstD subfamily.

It catalyses the reaction N-succinyl-L-glutamate 5-semialdehyde + NAD(+) + H2O = N-succinyl-L-glutamate + NADH + 2 H(+). Its pathway is amino-acid degradation; L-arginine degradation via AST pathway; L-glutamate and succinate from L-arginine: step 4/5. In terms of biological role, catalyzes the NAD-dependent reduction of succinylglutamate semialdehyde into succinylglutamate. In Legionella pneumophila subsp. pneumophila (strain Philadelphia 1 / ATCC 33152 / DSM 7513), this protein is N-succinylglutamate 5-semialdehyde dehydrogenase.